The chain runs to 115 residues: Ig heavy chain V region PJ14 (115 aa).

A signal peptide spans 1-19 (MAVLALLFCLVTFPSCILS). Positions 20 to 115 (QVQLKESGPG…TDDTARYYCA (96 aa)) constitute an Ig-like domain.

In Mus musculus (Mouse), this protein is Ig heavy chain V region PJ14.